Reading from the N-terminus, the 317-residue chain is Putative 2-hydroxyacid dehydrogenase SE_1879 (317 aa).

Residues 155–156 (EI), 234–236 (AGR), and Asp-260 contribute to the NAD(+) site. The active site involves Arg-236. Residue Glu-265 is part of the active site. His-283 serves as the catalytic Proton donor. 283–286 (HIGN) is a binding site for NAD(+).

Belongs to the D-isomer specific 2-hydroxyacid dehydrogenase family.

This is Putative 2-hydroxyacid dehydrogenase SE_1879 from Staphylococcus epidermidis (strain ATCC 12228 / FDA PCI 1200).